A 347-amino-acid chain; its full sequence is Glycerol-1-phosphate dehydrogenase [NAD(P)+] (347 aa).

NAD(+)-binding positions include 94–98 (GKVID) and 116–119 (TAAS). Substrate is bound at residue Asp121. Ser125 contributes to the NAD(+) binding site. Asp168 is a substrate binding site. Zn(2+) is bound by residues Asp168 and His248. His252 is a substrate binding site. His264 contributes to the Zn(2+) binding site.

Belongs to the glycerol-1-phosphate dehydrogenase family. As to quaternary structure, homooctamer. Zn(2+) is required as a cofactor.

It localises to the cytoplasm. The enzyme catalyses sn-glycerol 1-phosphate + NAD(+) = dihydroxyacetone phosphate + NADH + H(+). It catalyses the reaction sn-glycerol 1-phosphate + NADP(+) = dihydroxyacetone phosphate + NADPH + H(+). It functions in the pathway membrane lipid metabolism; glycerophospholipid metabolism. With respect to regulation, partially inhibited by divalent metal cations such as Co(2+), Cu(2+) and Ni(2+). In terms of biological role, catalyzes the NAD(P)H-dependent reduction of dihydroxyacetonephosphate (DHAP or glycerone phosphate) to glycerol 1-phosphate (G1P). The G1P thus generated is used as the glycerophosphate backbone of phospholipids in the cellular membranes of Archaea. Is also able to catalyze the reverse reaction, i.e. the NAD(P)(+)-dependent oxidation of G1P but not of G3P. Is not active toward glycerol, dihydroxyacetone, glyceraldehyde-3-phosphate, glyceraldehyde and glycerol-2-phosphate. In Methanothermobacter thermautotrophicus (strain ATCC 29096 / DSM 1053 / JCM 10044 / NBRC 100330 / Delta H) (Methanobacterium thermoautotrophicum), this protein is Glycerol-1-phosphate dehydrogenase [NAD(P)+] (egsA).